The chain runs to 122 residues: Small ribosomal subunit protein bS6 (122 aa).

This sequence belongs to the bacterial ribosomal protein bS6 family.

Functionally, binds together with bS18 to 16S ribosomal RNA. This is Small ribosomal subunit protein bS6 (rpsF) from Neisseria meningitidis serogroup B (strain ATCC BAA-335 / MC58).